A 314-amino-acid chain; its full sequence is Bifunctional pinoresinol-lariciresinol reductase (314 aa).

Residues 10–16 (GGTGYIG), Arg35, and Lys44 each bind NADP(+). Lys138 functions as the Proton acceptor in the catalytic mechanism. Arg142 is an NADP(+) binding site. Residue His270 participates in substrate binding.

It belongs to the NmrA-type oxidoreductase family. Isoflavone reductase subfamily. As to quaternary structure, dimer.

It catalyses the reaction (+)-lariciresinol + NADP(+) = (+)-pinoresinol + NADPH + H(+). It carries out the reaction (+)-secoisolariciresinol + NADP(+) = (-)-lariciresinol + NADPH + H(+). In terms of biological role, reductase involved in the lignan justicidin B biosynthesis. Catalyzes the enantioselective conversion of (+)-pinoresinol into (+)-lariciresinol and of (-)-lariciresinol into (+)-secoisolariciresinol. Low activity with the other enantiomers. Abstracts the 4R-hydride from the NADPH cofactor during catalysis. This chain is Bifunctional pinoresinol-lariciresinol reductase (PLR_Lp1), found in Linum perenne (Perennial flax).